Consider the following 366-residue polypeptide: Glycine betaine monooxygenase reductase subunit (366 aa).

The FAD-binding FR-type domain occupies 16-119 (NGRHLVRCVK…HGPVGLFNAI (104 aa)). In terms of domain architecture, 2Fe-2S ferredoxin-type spans 282–366 (HQVEFTATGK…VPKGDVVIDY (85 aa)). The [2Fe-2S] cluster site is built by Cys316, Cys321, Cys324, and Cys354.

The protein in the N-terminal section; belongs to the FAD-binding oxidoreductase type 6 family. The system is composed of an oxygenase subunit (GbcA) and a reductase subunit (GbcB). The cofactor is FAD. [2Fe-2S] cluster serves as cofactor.

It carries out the reaction glycine betaine + NADH + O2 + H(+) = N,N-dimethylglycine + formaldehyde + NAD(+) + H2O. Its function is as follows. Involved in degradation of glycine betaine. Part of a Rieske-type oxygenase system that catalyzes the conversion of glycine betaine (GB) to dimethylglycine (DMG). This subunit is the ferredoxin reductase component of the system. Required for growth on choline and GB, but not for growth on DMG. This is Glycine betaine monooxygenase reductase subunit from Pseudomonas aeruginosa (strain ATCC 15692 / DSM 22644 / CIP 104116 / JCM 14847 / LMG 12228 / 1C / PRS 101 / PAO1).